The sequence spans 84 residues: Defensin-like protein 116 (84 aa).

The first 24 residues, 1–24, serve as a signal peptide directing secretion; that stretch reads MAITKNMLVVLLLTIIFVTSSVHC. Disulfide bonds link C40/C80, C46/C71, C55/C78, and C59/C79.

It belongs to the DEFL family.

The protein resides in the secreted. This Arabidopsis thaliana (Mouse-ear cress) protein is Defensin-like protein 116.